The sequence spans 634 residues: Threonine--tRNA ligase (634 aa).

The region spanning 1 to 61 is the TGS domain; that stretch reads MINIRFPDGS…NSNCELRLIT (61 aa). The interval 241 to 532 is catalytic; that stretch reads DHRKIGKVLD…LIEHYAGNLP (292 aa). Residues C332, H383, and H509 each contribute to the Zn(2+) site.

This sequence belongs to the class-II aminoacyl-tRNA synthetase family. Homodimer. Requires Zn(2+) as cofactor.

The protein resides in the cytoplasm. The catalysed reaction is tRNA(Thr) + L-threonine + ATP = L-threonyl-tRNA(Thr) + AMP + diphosphate + H(+). Catalyzes the attachment of threonine to tRNA(Thr) in a two-step reaction: L-threonine is first activated by ATP to form Thr-AMP and then transferred to the acceptor end of tRNA(Thr). Also edits incorrectly charged L-seryl-tRNA(Thr). This Francisella tularensis subsp. tularensis (strain FSC 198) protein is Threonine--tRNA ligase.